A 72-amino-acid chain; its full sequence is Translation initiation factor IF-1 (72 aa).

In terms of domain architecture, S1-like spans 1-72; the sequence is MAKEELLEMR…TKGRITYRFK (72 aa).

This sequence belongs to the IF-1 family. Component of the 30S ribosomal translation pre-initiation complex which assembles on the 30S ribosome in the order IF-2 and IF-3, IF-1 and N-formylmethionyl-tRNA(fMet); mRNA recruitment can occur at any time during PIC assembly.

It is found in the cytoplasm. Functionally, one of the essential components for the initiation of protein synthesis. Stabilizes the binding of IF-2 and IF-3 on the 30S subunit to which N-formylmethionyl-tRNA(fMet) subsequently binds. Helps modulate mRNA selection, yielding the 30S pre-initiation complex (PIC). Upon addition of the 50S ribosomal subunit IF-1, IF-2 and IF-3 are released leaving the mature 70S translation initiation complex. In Sphingopyxis alaskensis (strain DSM 13593 / LMG 18877 / RB2256) (Sphingomonas alaskensis), this protein is Translation initiation factor IF-1.